The following is a 161-amino-acid chain: UPF0178 protein PXO_00400 (161 aa).

It belongs to the UPF0178 family.

This chain is UPF0178 protein PXO_00400, found in Xanthomonas oryzae pv. oryzae (strain PXO99A).